The following is a 255-amino-acid chain: Hemin import ATP-binding protein HmuV (255 aa).

One can recognise an ABC transporter domain in the interval 2–238; sequence LDVEGLHLKR…AALNAVFGID (237 aa). Residue 34 to 41 participates in ATP binding; that stretch reads GPNGAGKS.

Belongs to the ABC transporter superfamily. Heme (hemin) importer (TC 3.A.1.14.5) family. As to quaternary structure, the complex is composed of two ATP-binding proteins (HmuV), two transmembrane proteins (HmuU) and a solute-binding protein (HmuT).

It is found in the cell inner membrane. Part of the ABC transporter complex HmuTUV involved in hemin import. Responsible for energy coupling to the transport system. The chain is Hemin import ATP-binding protein HmuV from Pseudomonas entomophila (strain L48).